Here is a 546-residue protein sequence, read N- to C-terminus: Hexose transporter HXT10 (546 aa).

The Cytoplasmic portion of the chain corresponds to 1–44 (MVSSSVSILGTSAKASTSLSRKDEIKLTPETREASLDIPYKPII). A helical transmembrane segment spans residues 45 to 65 (AYWTVMGLCLMIAFGGFIFGW). Residues 66–100 (DTGTISGFINQTDFKRRFGELQRDGSFQLSDVRTG) lie on the Extracellular side of the membrane. Residue Asn75 is glycosylated (N-linked (GlcNAc...) asparagine). Residues 101-121 (LIVGIFNIGCALGGLTLGRLG) traverse the membrane as a helical segment. Over 122 to 127 (DIYGRK) the chain is Cytoplasmic. Residues 128 to 148 (IGLMCVILVYVVGIVIQIASS) traverse the membrane as a helical segment. Residues 149–158 (DKWYQYFIGR) are Extracellular-facing. The chain crosses the membrane as a helical span at residues 159 to 179 (IVSGMGVGGVAVLSPTLISEI). At 180–185 (SPKHLR) the chain is on the cytoplasmic side. A helical transmembrane segment spans residues 186–206 (GTCVSFYQLMITLGIFLGYCT). The Extracellular segment spans residues 207-220 (NYGTKKYSNSIQWR). The chain crosses the membrane as a helical span at residues 221 to 241 (VPLGLCFAWAIFMVIGMVMVP). Residues 242–324 (ESPRYLVEKG…IQSLQQLTGC (83 aa)) lie on the Cytoplasmic side of the membrane. A helical transmembrane segment spans residues 325-341 (NYFFYYGTTIFNAVGMQ). At 342–347 (DSFETS) the chain is on the extracellular side. Residues 348–365 (IVLGAVNFASTFVALYIV) form a helical membrane-spanning segment. Over 366–372 (DKFGRRK) the chain is Cytoplasmic. Residues 373-393 (CLLWGSASMAICFVIFATVGV) form a helical membrane-spanning segment. Topologically, residues 394–415 (TRLWPQGKDQPSSQSAGNVMIV) are extracellular. Residues 416 to 436 (FTCFFIFSFAITWAPIAYVIV) traverse the membrane as a helical segment. Residues 437 to 453 (AETYPLRVKNRAMAIAV) lie on the Cytoplasmic side of the membrane. Residues 454-474 (GANWMWGFLIGFFTPFITRSI) form a helical membrane-spanning segment. Residue Gly475 is a topological domain, extracellular. A helical membrane pass occupies residues 476 to 496 (FSYGYVFMGCLIFSYFYVFFF). At 497-546 (VCETKGLTLEEVNEMYEERIKPWKSGGWIPSSRRTPQPTSSTPLVIVDSK) the chain is on the cytoplasmic side.

Belongs to the major facilitator superfamily. Sugar transporter (TC 2.A.1.1) family.

Its subcellular location is the membrane. Functionally, probable glucose transporter. This is Hexose transporter HXT10 (HXT10) from Saccharomyces cerevisiae (strain ATCC 204508 / S288c) (Baker's yeast).